The primary structure comprises 78 residues: MEGDIVQMGAYIGAGLACTGMGGAAVGVGHVVGNFISGALRNPSAAASQTATMFIGIAFAEALGIFSFLVALLLMFAV.

2 helical membrane-spanning segments follow: residues 12–32 (IGAG…GHVV) and 54–74 (FIGI…ALLL).

It belongs to the ATPase C chain family. As to quaternary structure, F-type ATPases have 2 components, F(1) - the catalytic core - and F(0) - the membrane proton channel. F(1) has five subunits: alpha(3), beta(3), gamma(1), delta(1), epsilon(1). F(0) has four main subunits: a(1), b(1), b'(1) and c(10-14). The alpha and beta chains form an alternating ring which encloses part of the gamma chain. F(1) is attached to F(0) by a central stalk formed by the gamma and epsilon chains, while a peripheral stalk is formed by the delta, b and b' chains.

It localises to the cellular chromatophore membrane. Functionally, f(1)F(0) ATP synthase produces ATP from ADP in the presence of a proton or sodium gradient. F-type ATPases consist of two structural domains, F(1) containing the extramembraneous catalytic core and F(0) containing the membrane proton channel, linked together by a central stalk and a peripheral stalk. During catalysis, ATP synthesis in the catalytic domain of F(1) is coupled via a rotary mechanism of the central stalk subunits to proton translocation. Key component of the F(0) channel; it plays a direct role in translocation across the membrane. A homomeric c-ring of between 10-14 subunits forms the central stalk rotor element with the F(1) delta and epsilon subunits. The chain is ATP synthase subunit c from Rhodobacter capsulatus (Rhodopseudomonas capsulata).